We begin with the raw amino-acid sequence, 55 residues long: Large ribosomal subunit protein bL33 (55 aa).

This sequence belongs to the bacterial ribosomal protein bL33 family.

This is Large ribosomal subunit protein bL33 from Erythrobacter litoralis (strain HTCC2594).